We begin with the raw amino-acid sequence, 260 residues long: Ava biosynthesis cluster protein M (260 aa).

Residues 1-15 form the signal peptide; the sequence is MKVLVLGLCRTGTSS.

This sequence belongs to the cytochrome P450 family.

It functions in the pathway secondary metabolite biosynthesis. Its function is as follows. Part of the cluster that mediates the biosynthesis of a highly modified cyclo-arginine-tryptophan dipeptide (cRW). The first step of the pathway is perfornmed by the arginine-containing cyclodipeptide synthase (RCPDS) avaA that acts as the scaffold-generating enzyme and is responsible for formation of the cyclo-Arg-Trp (cRW) diketopiperazine. AvaB then acts as a multifunctional flavoenzyme that is responsible for generating the cyclo-Arg-formylkynurenine DKP, which can be deformylated by avaC. AvaB then further catalyzes an additional N-oxidation followed by cyclization and dehydration. The next step is an N-acetylation of the guanidine group catalyzed by the arginine N-acetyltransferase avaD. The roles of the additional enzymes identified within the ava cluster still have to be determined. This chain is Ava biosynthesis cluster protein M, found in Aspergillus versicolor.